The sequence spans 466 residues: Argininosuccinate lyase (466 aa).

The protein belongs to the lyase 1 family. Argininosuccinate lyase subfamily.

Its subcellular location is the cytoplasm. The catalysed reaction is 2-(N(omega)-L-arginino)succinate = fumarate + L-arginine. The protein operates within amino-acid biosynthesis; L-arginine biosynthesis; L-arginine from L-ornithine and carbamoyl phosphate: step 3/3. The sequence is that of Argininosuccinate lyase from Synechococcus sp. (strain ATCC 27144 / PCC 6301 / SAUG 1402/1) (Anacystis nidulans).